The chain runs to 31 residues: Photosystem II reaction center protein T (31 aa).

The helical transmembrane segment at 3–23 threads the bilayer; that stretch reads AIVYTFLLVGTLGIIFFAIFF.

Belongs to the PsbT family. PSII is composed of 1 copy each of membrane proteins PsbA, PsbB, PsbC, PsbD, PsbE, PsbF, PsbH, PsbI, PsbJ, PsbK, PsbL, PsbM, PsbT, PsbY, PsbZ, Psb30/Ycf12, at least 3 peripheral proteins of the oxygen-evolving complex and a large number of cofactors. It forms dimeric complexes.

It localises to the plastid. It is found in the chloroplast thylakoid membrane. Its function is as follows. Found at the monomer-monomer interface of the photosystem II (PS II) dimer, plays a role in assembly and dimerization of PSII. PSII is a light-driven water plastoquinone oxidoreductase, using light energy to abstract electrons from H(2)O, generating a proton gradient subsequently used for ATP formation. This Ostreococcus tauri protein is Photosystem II reaction center protein T.